Here is a 265-residue protein sequence, read N- to C-terminus: S-acyl fatty acid synthase thioesterase, medium chain (265 aa).

Methionine 1 carries the post-translational modification N-acetylmethionine. Residues serine 101 and histidine 237 contribute to the active site.

The protein belongs to the thioesterase family. In terms of assembly, interacts (via C-terminus) with FASN. As to expression, detected both in lactating and non-lactating breast epithelium (at protein level). Isoform 2 is up-regulated in bone marrow-derived mononuclear cells of rheumatoid arthritis patients.

The protein resides in the cytoplasm. The protein localises to the cytosol. It carries out the reaction (9Z)-octadecenoyl-[ACP] + H2O = (9Z)-octadecenoate + holo-[ACP] + H(+). The catalysed reaction is decanoyl-CoA + H2O = decanoate + CoA + H(+). It catalyses the reaction dodecanoyl-CoA + H2O = dodecanoate + CoA + H(+). The enzyme catalyses tetradecanoyl-CoA + H2O = tetradecanoate + CoA + H(+). It carries out the reaction hexadecanoyl-CoA + H2O = hexadecanoate + CoA + H(+). Contributes to the release of free fatty acids from fatty acid synthase (FASN). Has broad substrate specificity, giving rise to a range of free fatty acids with chain lengths between 10 and 16 carbon atoms (C10 - C16). The protein is S-acyl fatty acid synthase thioesterase, medium chain of Homo sapiens (Human).